The following is a 466-amino-acid chain: MPRMTDQAMKPIHVIGGGMAGSEATWQLVSQGVPVILHEMRGVKGTDAHHTDGLAELVCSNSFRSDDHRTNAVGLLHEEMRRLDSIILRQGDAARLPAGGALAVDRDVFSQAVTKELSEHPLVTISREEIPALPPEDWDSVIIATGPLTSESLSEAILKETGEGELAFFDAIAPVVYRDSVNTEKAWFQSRYDKGDTDAERKAYLNCPMDRDQYEAFIDALIAAEKTEFKEWEANTPYFDGCLPIEVMAERGRETLRHGPMKPVGLTNPHNPTVKPWAIVQLRQDNALGTLFNLVGFQTKMKYGAQGEVLRMIPGLEEARFARLGGIHRNTFLNSPKLLDAQLRLKSQPRLRFAGQLIGVEGYVESAAMGLLAGRYAAAERLGASLTPPPATTALGALIGHVTGGHLISGKGSFQPMNVNFGLFPPIEQPTVDADGNRIKGKAKTPARKAAMSARALSDLADWQAG.

Position 16–21 (16–21 (GGGMAG)) interacts with FAD.

Belongs to the MnmG family. TrmFO subfamily. FAD is required as a cofactor.

The protein localises to the cytoplasm. The catalysed reaction is uridine(54) in tRNA + (6R)-5,10-methylene-5,6,7,8-tetrahydrofolate + NADH + H(+) = 5-methyluridine(54) in tRNA + (6S)-5,6,7,8-tetrahydrofolate + NAD(+). It catalyses the reaction uridine(54) in tRNA + (6R)-5,10-methylene-5,6,7,8-tetrahydrofolate + NADPH + H(+) = 5-methyluridine(54) in tRNA + (6S)-5,6,7,8-tetrahydrofolate + NADP(+). In terms of biological role, catalyzes the folate-dependent formation of 5-methyl-uridine at position 54 (M-5-U54) in all tRNAs. This is Methylenetetrahydrofolate--tRNA-(uracil-5-)-methyltransferase TrmFO from Maricaulis maris (strain MCS10) (Caulobacter maris).